The chain runs to 401 residues: Probable cysteine desulfurase (401 aa).

The residue at position 223 (K223) is an N6-(pyridoxal phosphate)lysine.

The protein belongs to the class-V pyridoxal-phosphate-dependent aminotransferase family. Csd subfamily. Pyridoxal 5'-phosphate is required as a cofactor.

It carries out the reaction (sulfur carrier)-H + L-cysteine = (sulfur carrier)-SH + L-alanine. Its function is as follows. Catalyzes the removal of elemental sulfur and selenium atoms from L-cysteine, L-cystine, L-selenocysteine, and L-selenocystine to produce L-alanine. The polypeptide is Probable cysteine desulfurase (csdA) (Pseudomonas putida (strain ATCC 47054 / DSM 6125 / CFBP 8728 / NCIMB 11950 / KT2440)).